Here is a 339-residue protein sequence, read N- to C-terminus: 5-dehydro-2-deoxygluconokinase (339 aa).

The protein belongs to the carbohydrate kinase PfkB family.

It carries out the reaction 5-dehydro-2-deoxy-D-gluconate + ATP = 6-phospho-5-dehydro-2-deoxy-D-gluconate + ADP + H(+). It participates in polyol metabolism; myo-inositol degradation into acetyl-CoA; acetyl-CoA from myo-inositol: step 5/7. In terms of biological role, catalyzes the phosphorylation of 5-dehydro-2-deoxy-D-gluconate (2-deoxy-5-keto-D-gluconate or DKG) to 6-phospho-5-dehydro-2-deoxy-D-gluconate (DKGP). This chain is 5-dehydro-2-deoxygluconokinase, found in Clostridium tetani (strain Massachusetts / E88).